The chain runs to 225 residues: Peptidyl-tRNA hydrolase (225 aa).

Tyr27 serves as a coordination point for tRNA. The active-site Proton acceptor is the His32. Tyr78, Asn80, and Asn126 together coordinate tRNA. Residues 198–225 (FNPLDFSGPDRQDQPAPLNPAKTAPGES) form a disordered region.

Belongs to the PTH family. As to quaternary structure, monomer.

It is found in the cytoplasm. The catalysed reaction is an N-acyl-L-alpha-aminoacyl-tRNA + H2O = an N-acyl-L-amino acid + a tRNA + H(+). Functionally, hydrolyzes ribosome-free peptidyl-tRNAs (with 1 or more amino acids incorporated), which drop off the ribosome during protein synthesis, or as a result of ribosome stalling. Catalyzes the release of premature peptidyl moieties from peptidyl-tRNA molecules trapped in stalled 50S ribosomal subunits, and thus maintains levels of free tRNAs and 50S ribosomes. In Synechococcus sp. (strain JA-3-3Ab) (Cyanobacteria bacterium Yellowstone A-Prime), this protein is Peptidyl-tRNA hydrolase.